The primary structure comprises 1234 residues: ATP-dependent helicase/nuclease subunit A (1234 aa).

The region spanning 9–482 is the UvrD-like helicase ATP-binding domain; that stretch reads STWTDDQWEA…IDLNKNFRSR (474 aa). 30-37 is an ATP binding site; the sequence is AAAGSGKT. The region spanning 509-800 is the UvrD-like helicase C-terminal domain; sequence QAELKLGASY…RMMTIHSSKG (292 aa).

This sequence belongs to the helicase family. AddA subfamily. Heterodimer of AddA and AddB/RexB. It depends on Mg(2+) as a cofactor.

It carries out the reaction Couples ATP hydrolysis with the unwinding of duplex DNA by translocating in the 3'-5' direction.. It catalyses the reaction ATP + H2O = ADP + phosphate + H(+). Its function is as follows. The heterodimer acts as both an ATP-dependent DNA helicase and an ATP-dependent, dual-direction single-stranded exonuclease. Recognizes the chi site generating a DNA molecule suitable for the initiation of homologous recombination. The AddA nuclease domain is required for chi fragment generation; this subunit has the helicase and 3' -&gt; 5' nuclease activities. The sequence is that of ATP-dependent helicase/nuclease subunit A from Bacillus pumilus (strain SAFR-032).